Reading from the N-terminus, the 463-residue chain is A-type ATP synthase subunit B (463 aa).

Belongs to the ATPase alpha/beta chains family. Has multiple subunits with at least A(3), B(3), C, D, E, F, H, I and proteolipid K(x).

It is found in the cell membrane. Functionally, component of the A-type ATP synthase that produces ATP from ADP in the presence of a proton gradient across the membrane. The B chain is a regulatory subunit. The chain is A-type ATP synthase subunit B from Saccharolobus islandicus (strain Y.N.15.51 / Yellowstone #2) (Sulfolobus islandicus).